We begin with the raw amino-acid sequence, 246 residues long: Adenylate kinase 4 (246 aa).

Alanine 2 is modified (N-acetylalanine). 43 to 48 (GSGKGT) is a binding site for ATP. The interval 63–92 (STGDMLRAAVASKTPLGVKAKEAMEKGELV) is NMP. Residues threonine 64, arginine 69, 90–92 (ELV), 118–121 (GFPR), and glutamine 125 each bind AMP. An LID region spans residues 159–196 (GRWIHPSSGRSYHTKFAPPKTPGVDDITGEPLIQRKDD). Position 160 (arginine 160) interacts with ATP. AMP is bound by residues arginine 193 and arginine 204.

It belongs to the adenylate kinase family. Monomer.

The protein resides in the cytoplasm. The catalysed reaction is AMP + ATP = 2 ADP. Its function is as follows. Catalyzes the reversible transfer of the terminal phosphate group between ATP and AMP. Plays an important role in cellular energy homeostasis and in adenine nucleotide metabolism. The protein is Adenylate kinase 4 (ADK1) of Arabidopsis thaliana (Mouse-ear cress).